The chain runs to 233 residues: Large ribosomal subunit protein uL1 (233 aa).

It belongs to the universal ribosomal protein uL1 family. In terms of assembly, part of the 50S ribosomal subunit.

Functionally, binds directly to 23S rRNA. The L1 stalk is quite mobile in the ribosome, and is involved in E site tRNA release. Its function is as follows. Protein L1 is also a translational repressor protein, it controls the translation of the L11 operon by binding to its mRNA. This chain is Large ribosomal subunit protein uL1, found in Brucella suis (strain ATCC 23445 / NCTC 10510).